Here is a 318-residue protein sequence, read N- to C-terminus: Cytochrome f (318 aa).

The first 34 residues, 1–34 (MQNRNFFEYPKNWIILLIPIFTTFNLLFTSDCYA), serve as a signal peptide directing secretion. F35, C55, C58, and H59 together coordinate heme. Residues 284–303 (LQGLLVFLFLVVLAQVFLVL) traverse the membrane as a helical segment.

The protein belongs to the cytochrome f family. As to quaternary structure, the 4 large subunits of the cytochrome b6-f complex are cytochrome b6, subunit IV (17 kDa polypeptide, petD), cytochrome f and the Rieske protein, while the 4 small subunits are PetG, PetL, PetM and PetN. The complex functions as a dimer. Requires heme as cofactor.

The protein localises to the plastid. Its subcellular location is the chloroplast thylakoid membrane. Functionally, component of the cytochrome b6-f complex, which mediates electron transfer between photosystem II (PSII) and photosystem I (PSI), cyclic electron flow around PSI, and state transitions. This Chaetosphaeridium globosum (Charophycean green alga) protein is Cytochrome f.